A 194-amino-acid chain; its full sequence is ATP-dependent Clp protease proteolytic subunit 1 (194 aa).

S98 functions as the Nucleophile in the catalytic mechanism. H123 is a catalytic residue.

The protein belongs to the peptidase S14 family. Fourteen ClpP subunits assemble into 2 heptameric rings which stack back to back to give a disk-like structure with a central cavity, resembling the structure of eukaryotic proteasomes.

The protein resides in the cytoplasm. It carries out the reaction Hydrolysis of proteins to small peptides in the presence of ATP and magnesium. alpha-casein is the usual test substrate. In the absence of ATP, only oligopeptides shorter than five residues are hydrolyzed (such as succinyl-Leu-Tyr-|-NHMec, and Leu-Tyr-Leu-|-Tyr-Trp, in which cleavage of the -Tyr-|-Leu- and -Tyr-|-Trp bonds also occurs).. Functionally, cleaves peptides in various proteins in a process that requires ATP hydrolysis. Has a chymotrypsin-like activity. Plays a major role in the degradation of misfolded proteins. ClpXP1 is involved in the complete degradation of the Site-2 clipped anti-sigma-W factor RsiW. This results in the release of SigW and the transcription activation of the genes under the control of the sigma-W factor. The polypeptide is ATP-dependent Clp protease proteolytic subunit 1 (Halalkalibacterium halodurans (strain ATCC BAA-125 / DSM 18197 / FERM 7344 / JCM 9153 / C-125) (Bacillus halodurans)).